The following is a 132-amino-acid chain: Salivary protein 15 Iper-2 (132 aa).

A signal peptide spans 1-18; that stretch reads MKVVCIIVLFVIVAVNES. Asn24, Asn36, Asn62, Asn89, and Asn101 each carry an N-linked (GlcNAc...) asparagine glycan. Positions 113–132 are CD4-binding; that stretch reads GPNGQTCADKSQCVGHIPGC.

This sequence belongs to the salp15 family. Interacts with host CD4. Interacts with host DC-SIGN (CD209). As to quaternary structure, (Microbial infection) Interacts with Borrelia outer surface protein C (OspC). As to expression, expressed in salivary glands from feeding female ticks. Highly expressed 1 day after start of feeding, and weakly expressed at the initiation of feeding and 4 days after start of feeding.

Its subcellular location is the secreted. Salivary tick protein that downregulates host immune system by binding to both dendritic cells, and CD4(+) T cells. Specifically binds to the CD4 coreceptor on T cells. This interaction prevents the activation of the Src kinase, Lck, and its downstream substrate Zap-70, and results in deficient activation of PLCgamma1, the repression of calcium fluxes triggered by T-cell antigen receptor (TCR) ligation, and a subsequent reduction in interleukin-2 production. This salivary protein also binds to DC-SIGN (CD209) on dendritic cells (DC) and activates the Raf-1 kinase/MEK signaling pathway that results in down-regulating expression of pro-inflammatory cytokines. Furthermore, it inhibits T cell proliferation induced by DCs. It also inhibits in vitro keratinocyte inflammation induced by Borrelia burgdorferi or by the major outer surface protein (OspC) of Borrelia. In addition, it downregulates chemokines and monocyte chemoattractant protein 1, as well as several antimicrobial peptides such as defensins, cathelicidin, psoriasin, and RNase 7. Apart from its immunomodulatory activities, it is also associated with protection of Borrelia spirochetes from antibody-mediated killing through its binding to OspC. In vivo, tests on different immune disease animal models show promising therapeutic results, e.g., in inhibiting HIV infection, experimental autoimmune encephalomyelitis, transplantation rejection, and asthma. Functionally, (Microbial infection) Protects Borrelia garinii from anti-Borrelia antibody-mediated cytotoxicity in vitro. May facilitate B.garinii transmission in mouse model. Its function is as follows. (Microbial infection) Protects Borrelia burgdorferi from anti-Borrelia antibody-mediated cytotoxicity in vitro. In terms of biological role, (Microbial infection) Protects Borrelia afzelii from anti-Borrelia antibody-mediated cytotoxicity in vitro. This chain is Salivary protein 15 Iper-2, found in Ixodes persulcatus (Taiga tick).